The chain runs to 110 residues: MAAWGPAAAAPLLRGSRGLPLWHCAQRMFASQTEGELKVTQVLKEKFPRATAIQVTDISGGCGAMYEIKIESEEFKEKRTVQQHQMVNQALKEEIKGMHGLRIFTSVPKC.

The protein belongs to the BolA/IbaG family. In terms of assembly, interacts with NFU1.

The protein resides in the mitochondrion. Its function is as follows. Acts as a mitochondrial iron-sulfur (Fe-S) cluster assembly factor that facilitates (Fe-S) cluster insertion into a subset of mitochondrial proteins. Probably acts together with NFU1. The protein is BolA-like protein 3 (Bola3) of Mus musculus (Mouse).